The following is a 248-amino-acid chain: Isoprenyl transferase (248 aa).

D23 is an active-site residue. D23 serves as a coordination point for Mg(2+). Substrate-binding positions include 24–27 (GNGR), W28, R36, H40, and 68–70 (STE). The active-site Proton acceptor is the N71. Substrate-binding positions include W72, R74, R185, and 191–193 (RIS). Residue E204 coordinates Mg(2+).

This sequence belongs to the UPP synthase family. As to quaternary structure, homodimer. It depends on Mg(2+) as a cofactor.

Catalyzes the condensation of isopentenyl diphosphate (IPP) with allylic pyrophosphates generating different type of terpenoids. The polypeptide is Isoprenyl transferase (Neisseria gonorrhoeae (strain ATCC 700825 / FA 1090)).